Reading from the N-terminus, the 396-residue chain is MAEKEHYVRTKPHVNIGTIGHVDHGKTTLTAAITTVLAEKGLAKAEDYSQIDAAPEEKERGITINTAHVEYETEKRHYAHMDAPGHADYIKNMITGAAQMDGAILVVAATDGPMPQTREHILLARQVGVNYIVVFLNKCDLVDDPELIDLVEMEVRDLLTEYDYPGDDIPVVRGSALKALEGDKEAQEQILKLMDTVDEYIPTPERQTDKPFLMPVEDVFTITGRGTVASGRIDRGTVKVGDEVEIVGLVDKVLKSVVTGLEMFHKTLDSGEAGDNVGVLLRGIDRDQVVRGQVLAAPGSIQTHNKFKAQVYVLKKEEGGRHTPFFSDYRPQFYFHTTDITGEIELPEGTEMVMPGDNTEFTVTLIKPAAIEKGTKFTIREGGRTVGAGQVTEILD.

Positions 11 to 205 (KPHVNIGTIG…TVDEYIPTPE (195 aa)) constitute a tr-type G domain. Residues 20–27 (GHVDHGKT) form a G1 region. Position 20-27 (20-27 (GHVDHGKT)) interacts with GTP. Residue Thr-27 coordinates Mg(2+). A G2 region spans residues 61 to 65 (GITIN). Residues 82–85 (DAPG) are G3. Residues 82–86 (DAPGH) and 137–140 (NKCD) each bind GTP. The tract at residues 137–140 (NKCD) is G4. Residues 175–177 (SAL) form a G5 region.

The protein belongs to the TRAFAC class translation factor GTPase superfamily. Classic translation factor GTPase family. EF-Tu/EF-1A subfamily. Monomer.

The protein localises to the cytoplasm. The catalysed reaction is GTP + H2O = GDP + phosphate + H(+). In terms of biological role, GTP hydrolase that promotes the GTP-dependent binding of aminoacyl-tRNA to the A-site of ribosomes during protein biosynthesis. This is Elongation factor Tu from Lactobacillus helveticus (strain DPC 4571).